The primary structure comprises 147 residues: Large ribosomal subunit protein uL22 (147 aa).

Positions 110-147 (EEKKTVAKKAPAAKKTTTTKAPAKKTTSTKKATAKKES) are disordered. Low complexity predominate over residues 117 to 140 (KKAPAAKKTTTTKAPAKKTTSTKK).

The protein belongs to the universal ribosomal protein uL22 family. In terms of assembly, part of the 50S ribosomal subunit.

Functionally, this protein binds specifically to 23S rRNA; its binding is stimulated by other ribosomal proteins, e.g. L4, L17, and L20. It is important during the early stages of 50S assembly. It makes multiple contacts with different domains of the 23S rRNA in the assembled 50S subunit and ribosome. Its function is as follows. The globular domain of the protein is located near the polypeptide exit tunnel on the outside of the subunit, while an extended beta-hairpin is found that lines the wall of the exit tunnel in the center of the 70S ribosome. The sequence is that of Large ribosomal subunit protein uL22 from Campylobacter jejuni subsp. jejuni serotype O:6 (strain 81116 / NCTC 11828).